A 357-amino-acid polypeptide reads, in one-letter code: Arginine kinase Scy p 2.0101 (357 aa).

Residues 9 to 91 form the Phosphagen kinase N-terminal domain; that stretch reads KLEEGFKKLE…FDPIIEDYHK (83 aa). 64-68 provides a ligand contact to L-arginine; it reads GVGVY. IgE-binding and beta-hexosaminidase release from rat basophilic leukemia (RBL) cells stretches follow at residues 113–127 and 127–155; these read VDPD…RVRC and CGRS…VSST. A Phosphagen kinase C-terminal domain is found at 119–356; the sequence is FVISTRVRCG…LELIKIEKEM (238 aa). 122 to 126 is an ATP binding site; the sequence is STRVR. Position 185 (H185) interacts with ATP. A disulfide bridge connects residues C201 and C271. The igE-binding and beta-hexosaminidase release from rat basophilic leukemia (RBL) cells stretch occupies residues 204 to 218; the sequence is WPTGRGIYHNDNKTF. An igE-binding, but no beta-hexosaminidase release from rat basophilic leukemia (RBL) cells region spans residues 211–225; sequence YHNDNKTFLVWCNEE. L-arginine is bound at residue E225. R229 lines the ATP pocket. C271 is a binding site for L-arginine. Residues 280–284 and 309–314 contribute to the ATP site; these read RASVH and RGTRGE. E314 is a binding site for L-arginine. The igE-binding, but no beta-hexosaminidase release from rat basophilic leukemia (RBL) cells stretch occupies residues 316–330; it reads TEAEGGVYDISNKRR.

It belongs to the ATP:guanido phosphotransferase family. In terms of processing, glycosylated. In terms of tissue distribution, muscle (at protein level).

The catalysed reaction is L-arginine + ATP = N(omega)-phospho-L-arginine + ADP + H(+). Functionally, catalyzes the reversible transfer of high energy ATP gamma-phosphate group to L-arginine. The chain is Arginine kinase Scy p 2.0101 from Scylla paramamosain (Mud crab).